Consider the following 177-residue polypeptide: Anti-apoptotic protein NR13 (177 aa).

The short motif at 75–94 is the BH1 element; that stretch reads LEAEGGLNWGRLLALVVFTG. Residues 86–106 traverse the membrane as a helical segment; it reads LLALVVFTGTLAAALAESGCE. The BH2 motif lies at 126–141; the sequence is EWLEEHGGWDGFCRFF. The chain crosses the membrane as a helical span at residues 156 to 176; sequence SNAIMAAAGFGIAGLAFLLVV.

The protein belongs to the Bcl-2 family. Interacts with BAX. In terms of tissue distribution, expressed preferentially in heart, skeletal muscle, retina, optical tectum and bursa of Fabricius.

The protein localises to the cell membrane. Its function is as follows. Shows anti-apoptotic properties. Counteract the pro-apoptotic activity of BAX. The chain is Anti-apoptotic protein NR13 (NR13) from Gallus gallus (Chicken).